Here is a 166-residue protein sequence, read N- to C-terminus: Ribosome maturation factor RimP (166 aa).

Belongs to the RimP family.

The protein resides in the cytoplasm. In terms of biological role, required for maturation of 30S ribosomal subunits. The protein is Ribosome maturation factor RimP of Psychrobacter sp. (strain PRwf-1).